The chain runs to 403 residues: Serine/threonine transporter SstT (403 aa).

Transmembrane regions (helical) follow at residues 14–34 (VTQI…APAI), 44–64 (VFVS…VMAS), 79–99 (ILWL…VASM), 138–158 (ALLN…GVAL), 175–195 (GVTL…FGLV), 214–234 (LAVL…LIVF), 295–315 (MAGA…TLGI), 327–347 (VVAA…LLLI), and 353–373 (LFGI…IIGV).

Belongs to the dicarboxylate/amino acid:cation symporter (DAACS) (TC 2.A.23) family.

It is found in the cell inner membrane. The enzyme catalyses L-serine(in) + Na(+)(in) = L-serine(out) + Na(+)(out). It catalyses the reaction L-threonine(in) + Na(+)(in) = L-threonine(out) + Na(+)(out). In terms of biological role, involved in the import of serine and threonine into the cell, with the concomitant import of sodium (symport system). The protein is Serine/threonine transporter SstT of Pseudomonas putida (strain ATCC 700007 / DSM 6899 / JCM 31910 / BCRC 17059 / LMG 24140 / F1).